The chain runs to 282 residues: MNKSQLYPDSPLTDQDFNQLDQTVIEAARRQLVGRRFIELYGPLGRGMQSVFNDIFMESHEAKMDFQGSFDTEVESSRRVNYTIPMLYKDFVLYWRDLEQSKALDIPIDFSVAANAARDVAFLEDQMIFHGSKEFDIPGLMNVKGRLTHLIGNWYESGNAFQDIVEARNKLLEMNHNGPYALVLSPELYSLLHRVHKDTNVLEIEHVRELITAGVFQSPVLKGKSGVIVNTGRNNLDLAISEDFETAYLGEEGMNHPFRVYETVVLRIKRPAAICTLIDPEE.

It belongs to the encapsulin family. Family 1 subfamily. In terms of assembly, initially thought to form a 180 subunit shell. Forms hollow shells composed of 240 subunits, making a shell about 42-43 nm in diameter. The monomer is capable of assuming 4 different conformations which allows packaging into the icosahedron. The shell has 12 pentameric and 30 hexameric capsomers which form the vertices and faces of the icosahedral nanocompartment.

Its subcellular location is the encapsulin nanocompartment. Functionally, shell component of a type 1 encapsulin nanocompartment. Assembles into proteinaceous icosahedral shells 42-43 nm in diameter with an iron- and phosphorus-rich core (1Fe:1.1P) which can store over 23,000-35,000 iron atoms (with a calculated maximum of 83,000 Fe). There are 2 types of negatively charged open pores in the cryo-electron structure; a 3-fold pore where 3 hexamers meet with a minimal size of 7.2 Angstroms and a 5-fold pore where pentamers meet with a minimal size of 2.3 Angstroms. The 2-fold pore seen in other encapsulin nanocompartments is closed. Empty compartments can be generated in E.coli. Both types of pore have extra density in their centers in the structure. 2 different cargo proteins have been identified (IMEF and Fer); when both are expressed in E.coli with the shell protein only IMEF is detected within the nanocompartment. E.coli expressing all 3 genes stores the largest amount of iron and is protected from Fe/H2O2-induced oxidative stress. Part of the iron-mineralizing encapsulin-associated Firmicute (IMEF) system. The sequence is that of Type 1 encapsulin shell protein from Bacillus thermotolerans (Quasibacillus thermotolerans).